The sequence spans 404 residues: MRRYLRVVGLCLACGFCSLLYAFSQLAVSLEEGAAGGRRPQAAVVSWLADGGRGTGRGAGSAGPGRTGRYDMKTRPDEKMHLAVVACGERLEETVTMLKSALIFSIKPLHVHIFAEDQLHDSFKDRLASWSFLRRFDYSLYPITFPGDSAADWKKLFKPCASQRLFLPLILKEVDSLLYVDTDILFLRPVDDIWSLLKKFNSTQIAAMAPEHEEPRIGWYNRFARHPYYGRTGVNSGVMLMNMTRMRRKYFKNDMTTARLQWGDILMPLLKKYKLNITWGDQDLLNIVFSHNPESLFVFPCQWNYRPDHCIYGSNCREAEEEGVFILHGNRGVYHDDKQPAFRAVYEALRNCSLEDDSVRSLLKPLELELQKTVHTYCGKTYKIFIKQLTKSIRNRYDTPPKER.

Topologically, residues 1 to 6 (MRRYLR) are cytoplasmic. Residues 7–29 (VVGLCLACGFCSLLYAFSQLAVS) form a helical; Signal-anchor for type II membrane protein membrane-spanning segment. Over 30-404 (LEEGAAGGRR…NRYDTPPKER (375 aa)) the chain is Lumenal. A glycan (N-linked (GlcNAc...) asparagine) is linked at Asn-201.

This sequence belongs to the glycosyltransferase 8 family.

The protein localises to the membrane. The catalysed reaction is 3-O-(beta-D-glucosyl)-L-seryl-[EGF-like domain protein] + UDP-alpha-D-xylose = 3-O-[alpha-D-xylosyl-(1-&gt;3)-beta-D-glucosyl]-L-seryl-[EGF-like domain protein] + UDP + H(+). Glycosyltransferase which elongates the O-linked glucose attached to EGF-like repeats in the extracellular domain of Notch proteins by catalyzing the addition of xylose. This chain is Glucoside xylosyltransferase 1 (Gxylt1), found in Mus musculus (Mouse).